Reading from the N-terminus, the 276-residue chain is Ribosomal RNA small subunit methyltransferase A (276 aa).

S-adenosyl-L-methionine-binding residues include Asn27, Leu29, Gly54, Glu75, Asp101, and Asn123.

It belongs to the class I-like SAM-binding methyltransferase superfamily. rRNA adenine N(6)-methyltransferase family. RsmA subfamily.

The protein localises to the cytoplasm. It catalyses the reaction adenosine(1518)/adenosine(1519) in 16S rRNA + 4 S-adenosyl-L-methionine = N(6)-dimethyladenosine(1518)/N(6)-dimethyladenosine(1519) in 16S rRNA + 4 S-adenosyl-L-homocysteine + 4 H(+). In terms of biological role, specifically dimethylates two adjacent adenosines (A1518 and A1519) in the loop of a conserved hairpin near the 3'-end of 16S rRNA in the 30S particle. May play a critical role in biogenesis of 30S subunits. In Bartonella henselae (strain ATCC 49882 / DSM 28221 / CCUG 30454 / Houston 1) (Rochalimaea henselae), this protein is Ribosomal RNA small subunit methyltransferase A.